We begin with the raw amino-acid sequence, 886 residues long: DNA double-strand break repair Rad50 ATPase (886 aa).

ATP contacts are provided by residues 32-38 (NGAGKSS) and Gln-137. Coiled coils occupy residues 181-240 (IRSL…KEIK) and 320-416 (RKKE…GDLN). The 99-residue stretch at 391–489 (IKDVSDRINQ…EREELEATRN (99 aa)) folds into the Zinc-hook domain. The Zn(2+) site is built by Cys-437 and Cys-440. 2 coiled-coil regions span residues 450 to 657 (AKIR…ISEL) and 682 to 718 (EADK…EESK).

The protein belongs to the SMC family. RAD50 subfamily. In terms of assembly, homodimer. Forms a heterotetramer composed of two Mre11 subunits and two Rad50 subunits. Interacts with Mre11 and HerA. It depends on Zn(2+) as a cofactor.

Its function is as follows. Part of the Rad50/Mre11 complex, which is involved in the early steps of DNA double-strand break (DSB) repair. The complex may facilitate opening of the processed DNA ends to aid in the recruitment of HerA and NurA. Rad50 controls the balance between DNA end bridging and DNA resection via ATP-dependent structural rearrangements of the Rad50/Mre11 complex. This chain is DNA double-strand break repair Rad50 ATPase, found in Sulfolobus acidocaldarius (strain ATCC 33909 / DSM 639 / JCM 8929 / NBRC 15157 / NCIMB 11770).